A 688-amino-acid chain; its full sequence is Elongation factor G (688 aa).

One can recognise a tr-type G domain in the interval 8–282 (DKFRNFGIMA…GVVDYLPSPL (275 aa)). Residues 17–24 (AHIDAGKT), 81–85 (DTPGH), and 135–138 (NKMD) contribute to the GTP site.

It belongs to the TRAFAC class translation factor GTPase superfamily. Classic translation factor GTPase family. EF-G/EF-2 subfamily.

It is found in the cytoplasm. Catalyzes the GTP-dependent ribosomal translocation step during translation elongation. During this step, the ribosome changes from the pre-translocational (PRE) to the post-translocational (POST) state as the newly formed A-site-bound peptidyl-tRNA and P-site-bound deacylated tRNA move to the P and E sites, respectively. Catalyzes the coordinated movement of the two tRNA molecules, the mRNA and conformational changes in the ribosome. The chain is Elongation factor G from Clostridium botulinum (strain Alaska E43 / Type E3).